The sequence spans 173 residues: Pyridoxal 5'-phosphate synthase subunit PdxT (173 aa).

49 to 51 contributes to the L-glutamine binding site; sequence GES. The active-site Nucleophile is cysteine 81. L-glutamine is bound by residues arginine 113 and 141–142; that span reads IR.

Belongs to the glutaminase PdxT/SNO family. In terms of assembly, in the presence of PdxS, forms a dodecamer of heterodimers. Only shows activity in the heterodimer.

The catalysed reaction is aldehydo-D-ribose 5-phosphate + D-glyceraldehyde 3-phosphate + L-glutamine = pyridoxal 5'-phosphate + L-glutamate + phosphate + 3 H2O + H(+). It catalyses the reaction L-glutamine + H2O = L-glutamate + NH4(+). It participates in cofactor biosynthesis; pyridoxal 5'-phosphate biosynthesis. Catalyzes the hydrolysis of glutamine to glutamate and ammonia as part of the biosynthesis of pyridoxal 5'-phosphate. The resulting ammonia molecule is channeled to the active site of PdxS. In Mycolicibacterium paratuberculosis (strain ATCC BAA-968 / K-10) (Mycobacterium paratuberculosis), this protein is Pyridoxal 5'-phosphate synthase subunit PdxT.